Here is a 418-residue protein sequence, read N- to C-terminus: Serine hydroxymethyltransferase (418 aa).

(6S)-5,6,7,8-tetrahydrofolate contacts are provided by residues Leu-121 and 125–127 (GHL). Lys-230 is subject to N6-(pyridoxal phosphate)lysine. Residue 355–357 (SPF) coordinates (6S)-5,6,7,8-tetrahydrofolate.

This sequence belongs to the SHMT family. As to quaternary structure, homodimer. Requires pyridoxal 5'-phosphate as cofactor.

It localises to the cytoplasm. It carries out the reaction (6R)-5,10-methylene-5,6,7,8-tetrahydrofolate + glycine + H2O = (6S)-5,6,7,8-tetrahydrofolate + L-serine. It functions in the pathway one-carbon metabolism; tetrahydrofolate interconversion. Its pathway is amino-acid biosynthesis; glycine biosynthesis; glycine from L-serine: step 1/1. Catalyzes the reversible interconversion of serine and glycine with tetrahydrofolate (THF) serving as the one-carbon carrier. This reaction serves as the major source of one-carbon groups required for the biosynthesis of purines, thymidylate, methionine, and other important biomolecules. Also exhibits THF-independent aldolase activity toward beta-hydroxyamino acids, producing glycine and aldehydes, via a retro-aldol mechanism. The sequence is that of Serine hydroxymethyltransferase from Streptococcus pyogenes serotype M18 (strain MGAS8232).